Consider the following 61-residue polypeptide: Photosystem II reaction center protein K (61 aa).

A propeptide spanning residues 1-24 (MLNIFSLICICINSALHSSSFFFA) is cleaved from the precursor. A helical transmembrane segment spans residues 40–60 (MPVIPVLFFLLALVWQAAVSF).

Belongs to the PsbK family. As to quaternary structure, PSII is composed of 1 copy each of membrane proteins PsbA, PsbB, PsbC, PsbD, PsbE, PsbF, PsbH, PsbI, PsbJ, PsbK, PsbL, PsbM, PsbT, PsbX, PsbY, PsbZ, Psb30/Ycf12, at least 3 peripheral proteins of the oxygen-evolving complex and a large number of cofactors. It forms dimeric complexes.

It is found in the plastid. The protein resides in the chloroplast thylakoid membrane. Functionally, one of the components of the core complex of photosystem II (PSII). PSII is a light-driven water:plastoquinone oxidoreductase that uses light energy to abstract electrons from H(2)O, generating O(2) and a proton gradient subsequently used for ATP formation. It consists of a core antenna complex that captures photons, and an electron transfer chain that converts photonic excitation into a charge separation. The polypeptide is Photosystem II reaction center protein K (Liriodendron tulipifera (Tuliptree)).